We begin with the raw amino-acid sequence, 278 residues long: Large ribosomal subunit protein uL2 (278 aa).

The interval 201 to 278 is disordered; sequence HGNINDGKAG…IMRSRHQKKK (78 aa). Residues 210 to 221 are compositionally biased toward basic residues; the sequence is GRSRWRGKRPHV.

The protein belongs to the universal ribosomal protein uL2 family. In terms of assembly, part of the 50S ribosomal subunit. Forms a bridge to the 30S subunit in the 70S ribosome.

In terms of biological role, one of the primary rRNA binding proteins. Required for association of the 30S and 50S subunits to form the 70S ribosome, for tRNA binding and peptide bond formation. It has been suggested to have peptidyltransferase activity; this is somewhat controversial. Makes several contacts with the 16S rRNA in the 70S ribosome. The sequence is that of Large ribosomal subunit protein uL2 from Allorhizobium ampelinum (strain ATCC BAA-846 / DSM 112012 / S4) (Agrobacterium vitis (strain S4)).